The following is a 243-amino-acid chain: 1-(5-phosphoribosyl)-5-[(5-phosphoribosylamino)methylideneamino] imidazole-4-carboxamide isomerase (243 aa).

Residue Asp10 is the Proton acceptor of the active site. Asp129 acts as the Proton donor in catalysis.

It belongs to the HisA/HisF family.

The protein localises to the cytoplasm. It catalyses the reaction 1-(5-phospho-beta-D-ribosyl)-5-[(5-phospho-beta-D-ribosylamino)methylideneamino]imidazole-4-carboxamide = 5-[(5-phospho-1-deoxy-D-ribulos-1-ylimino)methylamino]-1-(5-phospho-beta-D-ribosyl)imidazole-4-carboxamide. The protein operates within amino-acid biosynthesis; L-histidine biosynthesis; L-histidine from 5-phospho-alpha-D-ribose 1-diphosphate: step 4/9. This is 1-(5-phosphoribosyl)-5-[(5-phosphoribosylamino)methylideneamino] imidazole-4-carboxamide isomerase from Saccharopolyspora erythraea (strain ATCC 11635 / DSM 40517 / JCM 4748 / NBRC 13426 / NCIMB 8594 / NRRL 2338).